Here is an 82-residue protein sequence, read N- to C-terminus: Small ribosomal subunit protein eS21 (82 aa).

It belongs to the eukaryotic ribosomal protein eS21 family.

The protein is Small ribosomal subunit protein eS21 (RPS21) of Cyanophora paradoxa.